Consider the following 400-residue polypeptide: Putative lysosomal acid lipase/cholesteryl ester hydrolase (400 aa).

The N-terminal stretch at 1–17 (MWRLIIIAILFQGLVNS) is a signal peptide. Asn-34, Asn-129, and Asn-159 each carry an N-linked (GlcNAc...) asparagine glycan. Positions 78–378 (PAVFLQHGLL…EWEHLDFIWG (301 aa)) constitute an AB hydrolase-1 domain. The Charge relay system role is filled by Ser-172. Asn-271 is a glycosylation site (N-linked (GlcNAc...) asparagine). His-372 serves as the catalytic Charge relay system.

This sequence belongs to the AB hydrolase superfamily. Lipase family. In terms of tissue distribution, expressed by the venom gland.

It is found in the secreted. It carries out the reaction a sterol ester + H2O = a sterol + a fatty acid + H(+). Its function is as follows. In physiological conditions, is crucial for intracellular hydrolysis of cholesteryl esters and triglycerides that have been internalized via receptor-mediated endocytosis of lipoprotein particles. In venom, the biological contribution is unknown. The polypeptide is Putative lysosomal acid lipase/cholesteryl ester hydrolase (Crotalus adamanteus (Eastern diamondback rattlesnake)).